The chain runs to 444 residues: Chromosomal replication initiator protein DnaA (444 aa).

The domain I, interacts with DnaA modulators stretch occupies residues 1-73; the sequence is MDSSAQQLWH…AEVVQDIVGY (73 aa). Positions 73-104 are domain II; that stretch reads YPVEIQLTAQQGDLIAIFQPHTSLESELSPTN. The domain III, AAA+ region stretch occupies residues 105–321; that stretch reads QLNPKYNFSR…GALIRATTYI (217 aa). The ATP site is built by Gly149, Gly151, Lys152, and Thr153. Residues 322 to 444 are domain IV, binds dsDNA; it reads SISGLPMTVE…ERINSLSRNQ (123 aa).

It belongs to the DnaA family. As to quaternary structure, oligomerizes as a right-handed, spiral filament on DNA at oriC.

The protein resides in the cytoplasm. Its function is as follows. Plays an essential role in the initiation and regulation of chromosomal replication. ATP-DnaA binds to the origin of replication (oriC) to initiate formation of the DNA replication initiation complex once per cell cycle. Binds the DnaA box (a 9 base pair repeat at the origin) and separates the double-stranded (ds)DNA. Forms a right-handed helical filament on oriC DNA; dsDNA binds to the exterior of the filament while single-stranded (ss)DNA is stabiized in the filament's interior. The ATP-DnaA-oriC complex binds and stabilizes one strand of the AT-rich DNA unwinding element (DUE), permitting loading of DNA polymerase. After initiation quickly degrades to an ADP-DnaA complex that is not apt for DNA replication. Binds acidic phospholipids. This is Chromosomal replication initiator protein DnaA from Microcystis aeruginosa (strain NIES-843 / IAM M-2473).